Consider the following 127-residue polypeptide: Large ribosomal subunit protein bL17 (127 aa).

Belongs to the bacterial ribosomal protein bL17 family. In terms of assembly, part of the 50S ribosomal subunit. Contacts protein L32.

The polypeptide is Large ribosomal subunit protein bL17 (Salmonella paratyphi A (strain AKU_12601)).